Consider the following 95-residue polypeptide: Blastocyst protein 4 (95 aa).

An N-terminal signal peptide occupies residues 1–20 (MGAVFAIIGGFALDSPILRL).

The sequence is that of Blastocyst protein 4 from Oryctolagus cuniculus (Rabbit).